The primary structure comprises 317 residues: Succinate receptor 1 (317 aa).

The Extracellular segment spans residues 1-23 (MAQNLSCENWLATEAILNKYYLS). Asn-4 carries an N-linked (GlcNAc...) asparagine glycan. The chain crosses the membrane as a helical span at residues 24–47 (AFYAIEFIFGLLGNVTVVFGYLFC). Residues 48 to 55 (MKNWNSSN) are Cytoplasmic-facing. The helical transmembrane segment at 56 to 76 (VYLFNLSISDFAFLCTLPILI) threads the bilayer. Residues 77–101 (KSYANDKGTYGDVLCISNRYVLHTN) are Extracellular-facing. A disulfide bridge links Cys-91 with Cys-168. The helical transmembrane segment at 102-119 (LYTSILFLTFISMDRYLL) threads the bilayer. Residues 120-133 (MKYPFREHFLQKKE) lie on the Cytoplasmic side of the membrane. The helical transmembrane segment at 134-157 (FAILISLAVWALVTLEVLPMLTFI) threads the bilayer. The Extracellular segment spans residues 158-180 (NSVPKEEGSNCIDYASSGNPEHN). The chain crosses the membrane as a helical span at residues 181 to 204 (LIYSLCLTLLGFLIPLSVMCFFYY). Over 205-228 (KMVVFLKRRSQQQATALPLDKPQR) the chain is Cytoplasmic. The chain crosses the membrane as a helical span at residues 229 to 246 (LVVLAVVIFSILFTPYHI). The Extracellular portion of the chain corresponds to 247 to 277 (MRNLRIASRLDSWPQGCTQKAIKSIYTLTRP). A helical membrane pass occupies residues 278–294 (LAFLNSAINPIFYFLMG). Over 295-317 (DHYREMLISKFRQYFKSLTSFRT) the chain is Cytoplasmic.

It belongs to the G-protein coupled receptor 1 family. Predominantly expressed in the kidney (proximal and distal tubules and the juxtaglomerular apparatus). Weakly expressed in liver, spleen and small intestine. Highly expressed in immature dendritic cells, expression rapidly downregulates after maturation. Also expressed in macrophages. Specifically expressed in intestinal tuft cells. Expression in whole muscle is attributable to major non-myofibrillar resident cell types, including stromal, endothelial and satellite cell populations.

It localises to the cell membrane. Functionally, g protein-coupled receptor for succinate able to mediate signaling through Gq/GNAQ or Gi/GNAI second messengers depending on the cell type and the processes regulated. Succinate-SUCNR1 signaling serves as a link between metabolic stress, inflammation and energy homeostasis. In macrophages, plays a range of immune-regulatory roles. During inflammation, succinate-SUCNR1 signaling may act as an anti-inflammatory mediator or boost inflammation depending on the inflammatory status of cells. Hyperpolarizes M2 macrophages versus M1 phenotype through Gq signaling by regulating the transcription of genes involved in immune function. In activated M1 macrophages, plays a pro-inflammatory role in response to LPS. Expressed in dendritic cells, where it is involved in the sensing of immunological danger and enhances immunity. Mediates succinate triggered intracelleular calcium mobilization, induces migratory responses and acts in synergy with Toll-like receptor ligands for the production of proinflammatory cytokines as well as an enhancement of antigen-specific activation of helper T cells. In the small intestine, mediates the activation of tuft cells by dietary succinate and triggers type 2 immunity. In adipocytes, plays an important role in the control of energy metabolism. In response to succinate, controls leptin expression in an AMPK-JNK-CEBPA-dependent as well as circadian clock-regulated manner. In muscle tissue, is expressed in non-muscle cells and coordinates muscle remodeling in response to the succinate produced during exercise training in a paracrine manner. In retina, acts as a mediator of vessel growth during retinal development. In response to succinate, regulates the production of angiogenic factors, including VEGF, by retinal ganglion neurons. The sequence is that of Succinate receptor 1 (Sucnr1) from Mus musculus (Mouse).